The primary structure comprises 180 residues: MAEKRNIFLVGPMGAGKSTIGRQLAQQLNMDFIDSDAVIEERTGADISWIFDLEGEDGFRKREERIINELTQMQGIVLSTGGGAVLSKENRNYLSARGIVIYLETTVEKQFQRTQRDKKRPLLQDAENPRQVLEDLAKIRNPLYEEIADITLPTDEQNAKIMVNQIVDLIDNMNGLNGTL.

An ATP-binding site is contributed by 14–19 (GAGKST). Mg(2+) is bound at residue Ser18. 3 residues coordinate substrate: Asp36, Arg60, and Gly82. Arg120 is an ATP binding site. Arg140 is a binding site for substrate. Residue Gln157 coordinates ATP.

This sequence belongs to the shikimate kinase family. In terms of assembly, monomer. The cofactor is Mg(2+).

The protein resides in the cytoplasm. It catalyses the reaction shikimate + ATP = 3-phosphoshikimate + ADP + H(+). Its pathway is metabolic intermediate biosynthesis; chorismate biosynthesis; chorismate from D-erythrose 4-phosphate and phosphoenolpyruvate: step 5/7. In terms of biological role, catalyzes the specific phosphorylation of the 3-hydroxyl group of shikimic acid using ATP as a cosubstrate. In Haemophilus influenzae (strain PittEE), this protein is Shikimate kinase.